A 240-amino-acid chain; its full sequence is MEENFKRILREKVSELNLSLDPLQEEKFYLYYMALKEWNRKINLTSLEGEEEIILKHFVDSLSCIIPIRNENIERIIDIGTGAGFPGIPIKIYDEKYKLTLLESQKKKILFLEELIKILELSDVEIVWDRAENLGKDPRYREQFDLALARGVAKPNIVLEYALPFVKTGGIFLGQATPNNLSEWENAQKVVGILGGKTEEKIEINFDNITRIFLKIRKINNTPEKYPRRPGIPEKRPLLP.

S-adenosyl-L-methionine is bound by residues Gly-80, Phe-85, 131–132, and Arg-150; that span reads AE.

Belongs to the methyltransferase superfamily. RNA methyltransferase RsmG family.

Its subcellular location is the cytoplasm. Its function is as follows. Specifically methylates the N7 position of a guanine in 16S rRNA. The protein is Ribosomal RNA small subunit methyltransferase G of Dictyoglomus thermophilum (strain ATCC 35947 / DSM 3960 / H-6-12).